Reading from the N-terminus, the 163-residue chain is Lipoprotein signal peptidase (163 aa).

The next 4 membrane-spanning stretches (helical) occupy residues 9–29 (YLAIAIIVLLLDQLSKWSALS), 39–59 (VLPFMNWLLLFNPGTAFSFLA), 67–87 (WFFTVLGLAASIYIIWMLYKS), and 92–112 (LLCIALSLILGGALGNVLDRV). Catalysis depends on residues D119 and D137. The chain crosses the membrane as a helical span at residues 130–150 (WPAFNIADSAICVGAALIIWG).

Belongs to the peptidase A8 family.

The protein resides in the cell inner membrane. It carries out the reaction Release of signal peptides from bacterial membrane prolipoproteins. Hydrolyzes -Xaa-Yaa-Zaa-|-(S,diacylglyceryl)Cys-, in which Xaa is hydrophobic (preferably Leu), and Yaa (Ala or Ser) and Zaa (Gly or Ala) have small, neutral side chains.. The protein operates within protein modification; lipoprotein biosynthesis (signal peptide cleavage). This protein specifically catalyzes the removal of signal peptides from prolipoproteins. The chain is Lipoprotein signal peptidase from Polynucleobacter necessarius subsp. necessarius (strain STIR1).